Consider the following 436-residue polypeptide: Anhydro-N-acetylmuramic acid kinase (436 aa).

ATP is bound at residue 32–39 (GTSLDGMD).

The protein belongs to the anhydro-N-acetylmuramic acid kinase family.

It catalyses the reaction 1,6-anhydro-N-acetyl-beta-muramate + ATP + H2O = N-acetyl-D-muramate 6-phosphate + ADP + H(+). It participates in amino-sugar metabolism; 1,6-anhydro-N-acetylmuramate degradation. The protein operates within cell wall biogenesis; peptidoglycan recycling. In terms of biological role, catalyzes the specific phosphorylation of 1,6-anhydro-N-acetylmuramic acid (anhMurNAc) with the simultaneous cleavage of the 1,6-anhydro ring, generating MurNAc-6-P. Is required for the utilization of anhMurNAc either imported from the medium or derived from its own cell wall murein, and thus plays a role in cell wall recycling. This Psychrobacter arcticus (strain DSM 17307 / VKM B-2377 / 273-4) protein is Anhydro-N-acetylmuramic acid kinase.